The sequence spans 196 residues: ATP-dependent Clp protease proteolytic subunit 1 (196 aa).

The Nucleophile role is filled by serine 96. Residue histidine 121 is part of the active site.

This sequence belongs to the peptidase S14 family. In terms of assembly, fourteen ClpP subunits assemble into 2 heptameric rings which stack back to back to give a disk-like structure with a central cavity, resembling the structure of eukaryotic proteasomes.

It is found in the cytoplasm. It carries out the reaction Hydrolysis of proteins to small peptides in the presence of ATP and magnesium. alpha-casein is the usual test substrate. In the absence of ATP, only oligopeptides shorter than five residues are hydrolyzed (such as succinyl-Leu-Tyr-|-NHMec, and Leu-Tyr-Leu-|-Tyr-Trp, in which cleavage of the -Tyr-|-Leu- and -Tyr-|-Trp bonds also occurs).. Cleaves peptides in various proteins in a process that requires ATP hydrolysis. Has a chymotrypsin-like activity. Plays a major role in the degradation of misfolded proteins. The polypeptide is ATP-dependent Clp protease proteolytic subunit 1 (Prochlorococcus marinus (strain SARG / CCMP1375 / SS120)).